We begin with the raw amino-acid sequence, 138 residues long: Large ribosomal subunit protein uL16 (138 aa).

Belongs to the universal ribosomal protein uL16 family. As to quaternary structure, part of the 50S ribosomal subunit.

In terms of biological role, binds 23S rRNA and is also seen to make contacts with the A and possibly P site tRNAs. The sequence is that of Large ribosomal subunit protein uL16 from Paramagnetospirillum magneticum (strain ATCC 700264 / AMB-1) (Magnetospirillum magneticum).